The chain runs to 537 residues: MKHSVSVTCCALLVSSISLSYAAEVPSGTVLAEKQELVRHIKDEPASLDPAKAVGLPEIQVIRDLFEGLVNQNEKGEIVPGVATQWKSNDNRIWTFTLRDNAKWADGTPVTAQDFVYSWQRLVDPKTLSPFAWFAALAGINNAQAIIDGKATPDQLGVTAVDAHTLKIQLDKPLPWFVNLTANFAFFPVQKANVESGKEWTKPGNLIGNGAYVLKERVVNEKLVVVPNTHYWDNAKTVLQKVTFLPINQESAATKRYLAGDIDITESFPKNMYQKLLKDIPGQVYTPPQLGTYYYAFNTQKGPTADQRVRLALSMTIDRRLMTEKVLGTGEKPAWHFTPDVTAGFTPEPSPFEQMSQEELNAQAKTLLSAAGYGPQKPLKLTLLYNTSENHQKIAIAVASMWKKNLGVDVKLQNQEWKTYIDSRNTGNFDVIRASWVGDYNEPSTFLTLLTSTHSGNISRFNNPAYDKVLAQASTENTVKARNADYNAAEKILMEQAPIAPIYQYTNGRLIKPWLKGYPINNPEDVAYSRTMYIVKH.

Residues 1–22 form the signal peptide; it reads MKHSVSVTCCALLVSSISLSYA. Residues lysine 42, valine 54, leucine 56, glutamine 289, arginine 424, serine 435, valine 437, aspartate 439, and threonine 506 each coordinate L-alanyl-gamma-D-glutamyl-meso-2,6-diaminopimelate.

This sequence belongs to the bacterial solute-binding protein 5 family. The complex is composed of two ATP-binding proteins (OppD and OppF), two transmembrane proteins (OppB and OppC) and a solute-binding protein (MppA).

The protein localises to the periplasm. Part of the ABC transporter complex MppA-OppBCDF involved in the uptake of the cell wall murein tripeptide L-alanyl-gamma-D-glutamyl-meso-diaminopimelate. Is involved in the recycling of cell wall peptides. Binds the cell wall peptide L-Ala-D-Gly-gamma-meso-diaminopimelic acid. Can also transport ordinary alpha-linked tripeptides such as Pro-Phe-Lys, but with much lower efficiency than OppA. Cannot bind typical tripeptides such as Lys-Glu-Lys, Lys-Lys-Lys or Ala-Ala-Ala. The chain is Periplasmic murein peptide-binding protein MppA from Escherichia coli (strain K12).